A 215-amino-acid chain; its full sequence is Protein-L-isoaspartate O-methyltransferase (215 aa).

Serine 62 is an active-site residue.

This sequence belongs to the methyltransferase superfamily. L-isoaspartyl/D-aspartyl protein methyltransferase family.

Its subcellular location is the cytoplasm. It carries out the reaction [protein]-L-isoaspartate + S-adenosyl-L-methionine = [protein]-L-isoaspartate alpha-methyl ester + S-adenosyl-L-homocysteine. Functionally, catalyzes the methyl esterification of L-isoaspartyl residues in peptides and proteins that result from spontaneous decomposition of normal L-aspartyl and L-asparaginyl residues. It plays a role in the repair and/or degradation of damaged proteins. In Ruegeria pomeroyi (strain ATCC 700808 / DSM 15171 / DSS-3) (Silicibacter pomeroyi), this protein is Protein-L-isoaspartate O-methyltransferase.